Consider the following 506-residue polypeptide: BTB/POZ domain-containing protein At3g22104 (506 aa).

A BTB domain is found at 6–76 (SDLEVDINGE…CYNDGRVAVM (71 aa)). In terms of domain architecture, NPH3 spans 187-435 (TWWFDEVLVL…LDEQQQQQQQ (249 aa)). Positions 421 to 492 (QAIETLDEQQ…MEVIKKRSKS (72 aa)) form a coiled coil. The segment at 485–506 (VIKKRSKSSSKGSNRSLPKLCS) is disordered.

This sequence belongs to the NPH3 family.

It functions in the pathway protein modification; protein ubiquitination. In terms of biological role, may act as a substrate-specific adapter of an E3 ubiquitin-protein ligase complex (CUL3-RBX1-BTB) which mediates the ubiquitination and subsequent proteasomal degradation of target proteins. The protein is BTB/POZ domain-containing protein At3g22104 of Arabidopsis thaliana (Mouse-ear cress).